A 259-amino-acid polypeptide reads, in one-letter code: Trans-4-hydroxycyclohexanecarboxylate dehydrogenase (259 aa).

11 residues coordinate NAD(+): R20, M22, D41, D73, V74, N100, Y164, K168, V197, T199, and T202. Catalysis depends on Y164, which acts as the Proton acceptor.

This sequence belongs to the short-chain dehydrogenases/reductases (SDR) family. In terms of assembly, homodimer. Homotetramer.

It carries out the reaction trans-4-hydroxycyclohexane-1-carboxylate + NAD(+) = 4-oxocyclohexane-1-carboxylate + NADH + H(+). Its activity is regulated as follows. Strongly inhibited by N-bromosuccinimide. Not inhibited by sulfhydryl reagents, such as iodoacetic acid, iodoacetamide, N-ethylmaleimide and p-hydroxymercuribenzoic acid. Its function is as follows. Dehydrogenase involved in a cyclohexanecarboxylate (CHCA) degradation pathway. Catalyzes the NAD(+)-dependent dehydrogenation of trans-4-hydroxycyclohexanecarboxylate (trans-4-hydroxyCHCA) to form 4-oxocyclohexanecarboxylate (4-oxoCHCA). Is highly specific for the trans-4-hydroxy derivative and shows only weak activity with cis-4-hydroxyCHCA. Can also catalyze the reverse reaction (4-oxoCHCA reduction) with a higher catalytic efficiency. In the reverse reaction, is highly specific for 4-oxoCHCA and cannot use either the 2-oxo or the 3-oxo homolog as substrate. Cannot use NADP(+). The protein is Trans-4-hydroxycyclohexanecarboxylate dehydrogenase of Sinomonas cyclohexanicum (Corynebacterium cyclohexanicum).